A 507-amino-acid chain; its full sequence is Maturase K (507 aa).

It belongs to the intron maturase 2 family. MatK subfamily.

It is found in the plastid. It localises to the chloroplast. Its function is as follows. Usually encoded in the trnK tRNA gene intron. Probably assists in splicing its own and other chloroplast group II introns. In Asimina triloba (Pawpaw), this protein is Maturase K.